Consider the following 135-residue polypeptide: HTH-type transcriptional repressor RghR (135 aa).

In terms of domain architecture, HTH cro/C1-type spans 8–63 (LRALREERKLTVNQLATYSGVSAAGISRIENGKRGVPKPATIKKLAEALKIPYEGL). Residues 19-38 (VNQLATYSGVSAAGISRIEN) constitute a DNA-binding region (H-T-H motif).

In terms of biological role, represses the expression of yvaM and both rapG and rapH. Binds directly to the promoter regions of yvaM, rapG and rapH. This is HTH-type transcriptional repressor RghR (rghR) from Bacillus subtilis (strain 168).